Reading from the N-terminus, the 131-residue chain is Global transcriptional regulator Spx 2 (131 aa).

The cysteines at positions 10 and 13 are disulfide-linked.

It belongs to the ArsC family. Spx subfamily. In terms of assembly, interacts with the C-terminal domain of the alpha subunit of the RNAP.

Its subcellular location is the cytoplasm. Functionally, global transcriptional regulator that plays a key role in stress response and exerts either positive or negative regulation of genes. Acts by interacting with the C-terminal domain of the alpha subunit of the RNA polymerase (RNAP). This interaction can enhance binding of RNAP to the promoter region of target genes and stimulate their transcription, or block interaction of RNAP with activator. This Bacillus cereus (strain ATCC 14579 / DSM 31 / CCUG 7414 / JCM 2152 / NBRC 15305 / NCIMB 9373 / NCTC 2599 / NRRL B-3711) protein is Global transcriptional regulator Spx 2.